The primary structure comprises 207 residues: Ribosomal RNA small subunit methyltransferase G (207 aa).

S-adenosyl-L-methionine contacts are provided by residues glycine 76, glutamine 81, 127–128 (VE), and arginine 141.

The protein belongs to the methyltransferase superfamily. RNA methyltransferase RsmG family.

It is found in the cytoplasm. The enzyme catalyses guanosine(527) in 16S rRNA + S-adenosyl-L-methionine = N(7)-methylguanosine(527) in 16S rRNA + S-adenosyl-L-homocysteine. In terms of biological role, specifically methylates the N7 position of guanine in position 527 of 16S rRNA. In Neisseria meningitidis serogroup B (strain ATCC BAA-335 / MC58), this protein is Ribosomal RNA small subunit methyltransferase G.